The primary structure comprises 394 residues: Enoyl-[acyl-carrier-protein] reductase [NADH] (394 aa).

NAD(+) is bound by residues 48–53 (GASTGY), 74–75 (YE), 111–112 (DA), and 139–140 (LA). Substrate is bound at residue tyrosine 225. Tyrosine 235 serves as the catalytic Proton donor. Residues lysine 244 and 273-275 (LVT) each bind NAD(+).

It belongs to the TER reductase family. In terms of assembly, monomer.

It carries out the reaction a 2,3-saturated acyl-[ACP] + NAD(+) = a (2E)-enoyl-[ACP] + NADH + H(+). The protein operates within lipid metabolism; fatty acid biosynthesis. Involved in the final reduction of the elongation cycle of fatty acid synthesis (FAS II). Catalyzes the reduction of a carbon-carbon double bond in an enoyl moiety that is covalently linked to an acyl carrier protein (ACP). The sequence is that of Enoyl-[acyl-carrier-protein] reductase [NADH] from Opitutus terrae (strain DSM 11246 / JCM 15787 / PB90-1).